The primary structure comprises 108 residues: DNA-directed RNA polymerase subunit omega (108 aa).

Positions M1–G32 are disordered.

It belongs to the RNA polymerase subunit omega family. As to quaternary structure, the RNAP catalytic core consists of 2 alpha, 1 beta, 1 beta' and 1 omega subunit. When a sigma factor is associated with the core the holoenzyme is formed, which can initiate transcription.

The enzyme catalyses RNA(n) + a ribonucleoside 5'-triphosphate = RNA(n+1) + diphosphate. Promotes RNA polymerase assembly. Latches the N- and C-terminal regions of the beta' subunit thereby facilitating its interaction with the beta and alpha subunits. The sequence is that of DNA-directed RNA polymerase subunit omega from Mycobacterium avium (strain 104).